A 732-amino-acid polypeptide reads, in one-letter code: Asp/Glu-specific dipeptidyl-peptidase (732 aa).

Positions 1-18 (MRIALVATLVLTSGIANA) are cleaved as a signal peptide. Catalysis depends on charge relay system residues His80, Asp215, and Ser666.

Belongs to the peptidase S46 family.

Its function is as follows. Catalyzes the removal of dipeptides from the N-terminus of oligopeptides. Shows a strict specificity for acidic residues (Asp or Glu) in the P1 position, and has probably a hydrophobic residue preference at the P2 position. Preferentially cleaves the synthetic substrate Leu-Glu-methylcoumaryl-7-amide (Leu-Glu-MCA) as compared to Leu-Asp-MCA. The polypeptide is Asp/Glu-specific dipeptidyl-peptidase (dpp11) (Shewanella putrefaciens (strain CN-32 / ATCC BAA-453)).